A 73-amino-acid chain; its full sequence is Mucroporin-like peptide (73 aa).

Positions 1–22 are cleaved as a signal peptide; that stretch reads MKVKCLLAVFLIVLIAAEHCQA. Position 38 is a lysine amide (K38). Residues 44–73 constitute a propeptide that is removed on maturation; it reads ELGTQFQPRQKNFMRREVDLERLFAEMPDY.

The protein belongs to the non-disulfide-bridged peptide (NDBP) superfamily. Short antimicrobial peptide (group 4) family. Expressed by the venom gland.

Its subcellular location is the secreted. The protein localises to the target cell membrane. Its function is as follows. Cationic host defense peptide that have antibacterial activity by breaking membranes. Is more effective on Gram-positive than on Gram-negative bacteria. The protein is Mucroporin-like peptide of Lychas mucronatus (Chinese swimming scorpion).